The primary structure comprises 148 residues: uncharacterized protein (148 aa).

Belongs to the IIV-6 395R family.

This is an uncharacterized protein from Aedes vexans (Inland floodwater mosquito).